Consider the following 392-residue polypeptide: Acetyl-CoA acetyltransferase (392 aa).

Catalysis depends on Cys-89, which acts as the Acyl-thioester intermediate. Residues His-348 and Cys-378 each act as proton acceptor in the active site.

This sequence belongs to the thiolase-like superfamily. Thiolase family. In terms of assembly, homotetramer.

The protein localises to the cytoplasm. The catalysed reaction is 2 acetyl-CoA = acetoacetyl-CoA + CoA. The protein operates within biopolymer metabolism; poly-(R)-3-hydroxybutanoate biosynthesis. It functions in the pathway metabolic intermediate biosynthesis; (R)-mevalonate biosynthesis; (R)-mevalonate from acetyl-CoA: step 1/3. The sequence is that of Acetyl-CoA acetyltransferase from Shinella zoogloeoides (Crabtreella saccharophila).